The primary structure comprises 707 residues: MEHAYQYSWIIPFVPLPIPILIGIGLLLFPTATKNLRRMWAFPNILLLSIVMIFSIDLSIQQINGSYIYQYVWSWTINNDFSFEFGYFIDSLTSIMSILITTVGIFVLIYSDNYMSHDQGYLRFFAYMSLFNTSMLGLVTSSNLIQIYIFWELVGMCSYLLIGFWFTRPAAANACQKAFVTNRIGDFGLLLGILGFYWITGSFEFQXLFEIFNNLIYNNEVHLLFVTLCASLLFAGAVAKSAQFPLHVWLPDAMXGPTPISALIHAATMVATGIFLVARLLPLFIVIPYIMNLISLIGIITVLLGATLPLAQKXIKRGLAYSTMSQLGYMMLALGMGSYRAALFHLITHAYSKALLFLGSGSIIHSMEAVVGYSPEKSQNMVLMGGLRKHAPITQIAFLIGTLSLCGIPPLACFWSKDEILSDSWLYSPIFAIIAWSTAGLTAFYMFRIYLLTFEGHLNIYFQKYSGKKSSSFYSIKLWGKEEQKMINRNFRLFPLLTMNKNEKPYTIGGNVKKRALITNFGYKEAFSYPHESDNTMLFPMLILVLFTLFVGAIAIPLNQEGMHLDILSKLXXPSINXLHKNSNDFEDSYQFLTNATFSVSIAGFGIFTAFLLYKPFYSSLLNLNLLNSFSKKGPKRIFLDKIIYLIYDWSYXRGYIDTFYSISLTKGIRGLAELTHFFDRRVIDGITNGVGITSFFVGEGIKYXGG.

Transmembrane regions (helical) follow at residues 9–29 (WIIP…LLLF), 40–60 (WAFP…DLSI), 89–109 (IDSL…FVLI), 125–145 (FAYM…SNLI), 147–167 (IYIF…FWFT), 184–204 (IGDF…GSFE), 219–239 (NEVH…GAVA), 258–278 (TPIS…FLVA), 280–300 (LLPL…IGII), 327–347 (LGYM…FHLI), 354–374 (ALLF…VGYS), 396–416 (IAFL…CFWS), 425–445 (WLYS…TAFY), 538–558 (LFPM…AIPL), and 592–612 (FLTN…TAFL).

It belongs to the complex I subunit 5 family. NDH is composed of at least 16 different subunits, 5 of which are encoded in the nucleus.

Its subcellular location is the plastid. The protein localises to the chloroplast thylakoid membrane. It catalyses the reaction a plastoquinone + NADH + (n+1) H(+)(in) = a plastoquinol + NAD(+) + n H(+)(out). It carries out the reaction a plastoquinone + NADPH + (n+1) H(+)(in) = a plastoquinol + NADP(+) + n H(+)(out). NDH shuttles electrons from NAD(P)H:plastoquinone, via FMN and iron-sulfur (Fe-S) centers, to quinones in the photosynthetic chain and possibly in a chloroplast respiratory chain. The immediate electron acceptor for the enzyme in this species is believed to be plastoquinone. Couples the redox reaction to proton translocation, and thus conserves the redox energy in a proton gradient. The polypeptide is NAD(P)H-quinone oxidoreductase subunit 5, chloroplastic (ndhF) (Malvaviscus arboreus (Turk's cap)).